Here is a 122-residue protein sequence, read N- to C-terminus: MGDSDLTAIRRKALRRGRISEYVAAVFLMLKGYRILALRHRTRLGEIDIIARKGDLAVFVEVKARHGEAAAVDAVSVAAQKRIRAASDLWLARQADQARLSQRYDIVAIMPGRLPRHFLDAF.

Belongs to the UPF0102 family.

The polypeptide is UPF0102 protein RL0336 (Rhizobium johnstonii (strain DSM 114642 / LMG 32736 / 3841) (Rhizobium leguminosarum bv. viciae)).